Reading from the N-terminus, the 88-residue chain is Small ribosomal subunit protein uS15 (88 aa).

This sequence belongs to the universal ribosomal protein uS15 family. As to quaternary structure, part of the 30S ribosomal subunit. Forms a bridge to the 50S subunit in the 70S ribosome, contacting the 23S rRNA.

In terms of biological role, one of the primary rRNA binding proteins, it binds directly to 16S rRNA where it helps nucleate assembly of the platform of the 30S subunit by binding and bridging several RNA helices of the 16S rRNA. Functionally, forms an intersubunit bridge (bridge B4) with the 23S rRNA of the 50S subunit in the ribosome. This Sorangium cellulosum (strain So ce56) (Polyangium cellulosum (strain So ce56)) protein is Small ribosomal subunit protein uS15.